Reading from the N-terminus, the 585-residue chain is Eukaryotic translation initiation factor 3 subunit D (585 aa).

Residues 43 to 60 (LGRMADWTGDGKDRDRGG) show a composition bias toward basic and acidic residues. 2 disordered regions span residues 43–62 (LGRMADWTGDGKDRDRGGRQ) and 109–152 (RGGG…NRSA). Residues 109 to 130 (RGGGTVFRGRGQRGVGQRGGRA) are compositionally biased toward gly residues. Residues 300–314 (SIDLVTVNENAADAP) form an RNA gate region. A disordered region spans residues 560-585 (VPPNTFEEDDEAAEEQEEKAEEESEE). Acidic residues predominate over residues 565–585 (FEEDDEAAEEQEEKAEEESEE).

Belongs to the eIF-3 subunit D family. As to quaternary structure, component of the eukaryotic translation initiation factor 3 (eIF-3) complex.

It localises to the cytoplasm. In terms of biological role, mRNA cap-binding component of the eukaryotic translation initiation factor 3 (eIF-3) complex, which is involved in protein synthesis of a specialized repertoire of mRNAs and, together with other initiation factors, stimulates binding of mRNA and methionyl-tRNAi to the 40S ribosome. The eIF-3 complex specifically targets and initiates translation of a subset of mRNAs involved in cell proliferation. In the eIF-3 complex, eif3d specifically recognizes and binds the 7-methylguanosine cap of a subset of mRNAs. This Neosartorya fischeri (strain ATCC 1020 / DSM 3700 / CBS 544.65 / FGSC A1164 / JCM 1740 / NRRL 181 / WB 181) (Aspergillus fischerianus) protein is Eukaryotic translation initiation factor 3 subunit D.